We begin with the raw amino-acid sequence, 319 residues long: Beta-ketoacyl-[acyl-carrier-protein] synthase III (319 aa).

Residues cysteine 112 and histidine 246 contribute to the active site. Residues glutamine 247–arginine 251 are ACP-binding. Residue asparagine 276 is part of the active site.

The protein belongs to the thiolase-like superfamily. FabH family. As to quaternary structure, homodimer.

The protein resides in the cytoplasm. It catalyses the reaction malonyl-[ACP] + acetyl-CoA + H(+) = 3-oxobutanoyl-[ACP] + CO2 + CoA. It functions in the pathway lipid metabolism; fatty acid biosynthesis. In terms of biological role, catalyzes the condensation reaction of fatty acid synthesis by the addition to an acyl acceptor of two carbons from malonyl-ACP. Catalyzes the first condensation reaction which initiates fatty acid synthesis and may therefore play a role in governing the total rate of fatty acid production. Possesses both acetoacetyl-ACP synthase and acetyl transacylase activities. Its substrate specificity determines the biosynthesis of branched-chain and/or straight-chain of fatty acids. This is Beta-ketoacyl-[acyl-carrier-protein] synthase III from Pseudoalteromonas atlantica (strain T6c / ATCC BAA-1087).